Consider the following 147-residue polypeptide: Hemoglobin subunit epsilon (147 aa).

One can recognise a Globin domain in the interval 3-147 (HWSAEEKQLI…VAHALARKYH (145 aa)). Heme b contacts are provided by His64 and His93.

It belongs to the globin family. Heterotetramer of two epsilon chains and two alpha chains. Hemoglobin E (Hbe) contains a alpha-A chains while hemoglobin M (Hbm) contains alpha-D chains.

Its function is as follows. Beta-type chain found in early embryos. This chain is Hemoglobin subunit epsilon (HBE), found in Gallus gallus (Chicken).